Here is a 536-residue protein sequence, read N- to C-terminus: 1,4-beta-D-glucan cellobiohydrolase B (536 aa).

The N-terminal stretch at Met1–Ala21 is a signal peptide. Residues Gln22–Ser458 form a catalytic region. Catalysis depends on Glu233, which acts as the Nucleophile. Catalysis depends on Glu238, which acts as the Proton donor. 2 N-linked (GlcNAc...) asparagine glycosylation sites follow: Asn351 and Asn414. A ser/Thr-rich linker region spans residues Thr459–Ser500. The interval Ser464–Thr499 is disordered. The CBM1 domain occupies Ser500–Leu536. 2 disulfide bridges follow: Cys508–Cys525 and Cys519–Cys535.

Belongs to the glycosyl hydrolase 7 (cellulase C) family.

It localises to the secreted. It carries out the reaction Hydrolysis of (1-&gt;4)-beta-D-glucosidic linkages in cellulose and cellotetraose, releasing cellobiose from the non-reducing ends of the chains.. In terms of biological role, the biological conversion of cellulose to glucose generally requires three types of hydrolytic enzymes: (1) Endoglucanases which cut internal beta-1,4-glucosidic bonds; (2) Exocellobiohydrolases that cut the disaccharide cellobiose from the non-reducing end of the cellulose polymer chain; (3) Beta-1,4-glucosidases which hydrolyze the cellobiose and other short cello-oligosaccharides to glucose. The chain is 1,4-beta-D-glucan cellobiohydrolase B (cbhB) from Aspergillus niger.